We begin with the raw amino-acid sequence, 377 residues long: Nitric oxide reductase FlRd-NAD(+) reductase (377 aa).

Belongs to the FAD-dependent oxidoreductase family. FAD is required as a cofactor.

It is found in the cytoplasm. It catalyses the reaction 2 reduced [nitric oxide reductase rubredoxin domain] + NAD(+) + H(+) = 2 oxidized [nitric oxide reductase rubredoxin domain] + NADH. The protein operates within nitrogen metabolism; nitric oxide reduction. One of at least two accessory proteins for anaerobic nitric oxide (NO) reductase. Reduces the rubredoxin moiety of NO reductase. The sequence is that of Nitric oxide reductase FlRd-NAD(+) reductase from Salmonella schwarzengrund (strain CVM19633).